Here is a 1304-residue protein sequence, read N- to C-terminus: Splicing factor 3B subunit 1 (1304 aa).

Disordered regions lie at residues 100-119 and 124-148; these read QYDP…EDEY and RTMI…PKMN. Over residues 104-119 the composition is skewed to basic and acidic residues; that stretch reads FAEHRPPKIADREDEY. Thr125 is subject to Phosphothreonine. Residue Ser129 is modified to Phosphoserine. At Lys141 the chain carries N6-acetyllysine. Position 142 is a phosphothreonine (Thr142). A Citrulline modification is found at Arg157. Residues 173-360 are disordered; sequence AEKAKAGELK…PVLTPGKTPI (188 aa). Positions 190–342 are U2AF homology region; mediates interaction with RBM39; the sequence is SQPPSKRKRR…KRKSRWDETP (153 aa). Phosphoserine is present on Ser194. A phosphothreonine mark is found at Thr203, Thr207, and Thr211. Position 214 is an N6-acetyllysine; alternate (Lys214). Residue Lys214 forms a Glycyl lysine isopeptide (Lys-Gly) (interchain with G-Cter in SUMO2); alternate linkage. Phosphothreonine occurs at positions 223 and 227. The segment at 223–491 is interaction with PPP1R8; that stretch reads TPGHTPSLRW…VDESTLSPEE (269 aa). Ser229 carries the post-translational modification Phosphoserine. The span at 231–241 shows a compositional bias: basic and acidic residues; that stretch reads RWDETPGRAKG. 8 positions are modified to phosphothreonine: Thr235, Thr244, Thr248, Thr257, Thr261, Thr267, Thr273, and Thr278. Ser287 carries the phosphoserine modification. Residues 291-304 show a composition bias toward basic and acidic residues; the sequence is NRWDETPKTERDTP. Phosphothreonine occurs at positions 296, 299, 303, and 313. A Phosphoserine modification is found at Ser322. Phosphothreonine is present on residues Thr326 and Thr328. Phosphoserine is present on Ser332. Thr341 bears the Phosphothreonine mark. Residues 342 to 352 show a composition bias toward polar residues; the sequence is PASQMGGSTPV. 2 positions are modified to phosphoserine: Ser344 and Ser349. Phosphothreonine occurs at positions 350 and 354. Residue Ser400 is modified to Phosphoserine. Lys413 is covalently cross-linked (Glycyl lysine isopeptide (Lys-Gly) (interchain with G-Cter in SUMO2); alternate). A Glycyl lysine isopeptide (Lys-Gly) (interchain with G-Cter in SUMO1); alternate cross-link involves residue Lys413. Thr426 carries the post-translational modification Phosphothreonine. Lys430 is covalently cross-linked (Glycyl lysine isopeptide (Lys-Gly) (interchain with G-Cter in SUMO2)). The residue at position 434 (Thr434) is a Phosphothreonine; by DYRK1A. Residue Thr436 is modified to Phosphothreonine. Residue Ser488 is modified to Phosphoserine. HEAT repeat units follow at residues 529-568, 569-603, 604-641, 643-677, 680-718, 763-801, 843-881, 1010-1048, 1052-1090, 1122-1160, and 1163-1201; these read GPLF…DLVR, PYVH…LAKA, AGLA…ALGI, SLLP…LMGC, LPHL…AATP, NYYT…TDGV, KVGA…NLGA, TPPI…RGAE, AREW…AIGP, TCSP…YIGE, and KDYI…GVYG. Residues 529–568 are interaction with SF3B14; that stretch reads GPLFNQILPLLMSPTLEDQERHLLVKVIDRILYKLDDLVR. Residues 547-550 are interaction with PHF5A; it reads QERH. Residues Lys554 and Lys562 each carry the N6-acetyllysine modification. An interaction with PHF5A region spans residues 1156–1157; that stretch reads EY. Residues 1248-1304 are interaction with SF3B3 and SF3B5; it reads QYCLQGLFHPARKVRDVYWKIYNSIYIGSQDALIAHYPRIYNDDKNTYIRYELDYIL.

The protein belongs to the SF3B1 family. As to quaternary structure, component of the 17S U2 SnRNP complex, a ribonucleoprotein complex that contains small nuclear RNA (snRNA) U2 and a number of specific proteins. Part of the SF3B subcomplex of the 17S U2 SnRNP complex. SF3B associates with the splicing subcomplex SF3A and a 12S RNA unit to form the U2 small nuclear ribonucleoproteins complex (U2 snRNP). Within the SF3B complex, interacts directly (via HEAT domain) with SF3B3, SF3B5, SF3B6 and (via HEAT domain) with PHF5A. The SF3B subcomplex interacts with U2AF2. Identified in the spliceosome C complex. Component of the minor (U12-type spliceosome) spliceosome. Within the minor spliceosome complex, interacts with SCNM1 and CRIPT. Component of the B-WICH complex, at least composed of SMARCA5/SNF2H, BAZ1B/WSTF, SF3B1, DEK, MYO1C, ERCC6, MYBBP1A and DDX21. Phosphorylated form interacts with PPP1R8. Interacts with PQBP1. Interacts with RBM17. Interacts with RBM39. Interacts with SETX. Interacts with RBM15. Interacts with USH1G. Interacts with SDE2. Interacts with U2AF1. Interacts with CACTIN. Interacts with ZRSR1. Interacts with CYREN. Phosphorylated. Phosphorylation occurs concomitantly with the splicing catalytic steps. Phosphorylation on Thr-244, Thr-248 and Thr-313 by cyclin-dependent kinases promotes interaction with PPP1R8 during mitosis. In terms of processing, citrullinated by PADI4.

Its subcellular location is the nucleus. The protein resides in the nucleus speckle. Functionally, component of the 17S U2 SnRNP complex of the spliceosome, a large ribonucleoprotein complex that removes introns from transcribed pre-mRNAs. The 17S U2 SnRNP complex (1) directly participates in early spliceosome assembly and (2) mediates recognition of the intron branch site during pre-mRNA splicing by promoting the selection of the pre-mRNA branch-site adenosine, the nucleophile for the first step of splicing. Within the 17S U2 SnRNP complex, SF3B1 is part of the SF3B subcomplex, which is required for 'A' complex assembly formed by the stable binding of U2 snRNP to the branchpoint sequence in pre-mRNA. Sequence independent binding of SF3A and SF3B subcomplexes upstream of the branch site is essential, it may anchor U2 snRNP to the pre-mRNA. May also be involved in the assembly of the 'E' complex. Also acts as a component of the minor spliceosome, which is involved in the splicing of U12-type introns in pre-mRNAs. Together with other U2 snRNP complex components may also play a role in the selective processing of microRNAs (miRNAs) from the long primary miRNA transcript, pri-miR-17-92. The chain is Splicing factor 3B subunit 1 from Homo sapiens (Human).